The primary structure comprises 483 residues: Septin-8 (483 aa).

A compositionally biased stretch (basic and acidic residues) spans 1–16 (MAATDLERFSNAEPEP). Residues 1–22 (MAATDLERFSNAEPEPRSLSLG) form a disordered region. Ala-2 bears the N-acetylalanine mark. Ser-10 is subject to Phosphoserine. The Septin-type G domain maps to 41-307 (QGFSFNILCV…ELYRRCKLEE (267 aa)). A G1 motif region spans residues 51–58 (GETGIGKS). Residues 51 to 58 (GETGIGKS), Gly-106, 187 to 195 (KADTISKSE), Gly-241, and Arg-256 contribute to the GTP site. The segment at 103 to 106 (DAVG) is G3 motif. The interval 186-189 (AKAD) is G4 motif. The stretch at 320–413 (FSLQETYEAK…AVEALQSQAL (94 aa)) forms a coiled coil. Polar residues predominate over residues 411–420 (QALHATSQQP). Residues 411-443 (QALHATSQQPLRKDKDKKNRSDIGAHQPGMSLS) are disordered. Residues 421–433 (LRKDKDKKNRSDI) are compositionally biased toward basic and acidic residues.

Belongs to the TRAFAC class TrmE-Era-EngA-EngB-Septin-like GTPase superfamily. Septin GTPase family. In terms of assembly, septins polymerize into heterooligomeric protein complexes that form filaments, and can associate with cellular membranes, actin filaments and microtubules. GTPase activity is required for filament formation. Interacts with CDK14. Interacts with SEPTIN5. Interacts with SEPTIN7. Interacts with SEPTIN4. Interacts with VAMP2; the interaction inhibits interaction of VAMP2 with SYP. Interacts with STX1A. In terms of tissue distribution, widely expressed, including in brain, heart and platelets; most abundant in aorta. Isoform 2 is expressed at low levels in specific brain areas, such as occipital pole, frontal lobe, temporal lobe and putamen. Isoform 1 and 3 are highly expressed in specific brain areas, such as occipital pole, frontal lobe, temporal lobe and putamen. Isoform 2 is highly expressed in prostate, testis and ovary. Isoform 1 and isoform 3 are expressed at low levels in prostate, testis and ovary.

Its subcellular location is the cytoplasm. The protein localises to the cytoskeleton. It is found in the synapse. The protein resides in the cell projection. It localises to the axon. Its subcellular location is the cytoplasmic vesicle. The protein localises to the secretory vesicle. It is found in the synaptic vesicle membrane. The protein resides in the presynapse. Its function is as follows. Filament-forming cytoskeletal GTPase. May play a role in platelet secretion. Seems to participate in the process of SNARE complex formation in synaptic vesicles. In terms of biological role, stabilizes BACE1 protein levels and promotes the sorting and accumulation of BACE1 to the recycling or endosomal compartments, modulating the beta-amyloidogenic processing of APP. The chain is Septin-8 from Homo sapiens (Human).